Here is a 590-residue protein sequence, read N- to C-terminus: uncharacterized protein (590 aa).

2 disordered regions span residues 306–329 and 528–590; these read IAEP…GIPY and QPAP…LMNL. Over residues 543–563 the composition is skewed to pro residues; it reads PSLPQPVPEPLAPQEPPPPGT.

This is an uncharacterized protein from Ictaluridae (bullhead catfishes).